A 229-amino-acid polypeptide reads, in one-letter code: Acetylcholine-binding protein (229 aa).

An N-terminal signal peptide occupies residues 1-19 (MRRNIFCLACLWIVQACLS). The N-linked (GlcNAc...) asparagine glycan is linked to Asn85. One can recognise an Ig-like domain in the interval 114 to 217 (PEVLTPQLAR…PEAYEDVEVS (104 aa)). A disulfide bridge connects residues Cys142 and Cys155.

As to quaternary structure, homopentamer. Post-translationally, N-glycosylated. Expressed by glial cells.

The protein localises to the synaptic cleft. In terms of biological role, binds to acetylcholine. Modulates neuronal synaptic transmission. This Lymnaea stagnalis (Great pond snail) protein is Acetylcholine-binding protein.